Here is a 330-residue protein sequence, read N- to C-terminus: Biotin synthase (330 aa).

The Radical SAM core domain maps to 43–272; it reads FMGDKFDTCS…RAFLRFSGGR (230 aa). Residues cysteine 61, cysteine 65, and cysteine 68 each contribute to the [4Fe-4S] cluster site. Residues serine 105, cysteine 137, cysteine 197, and arginine 267 each coordinate [2Fe-2S] cluster.

This sequence belongs to the radical SAM superfamily. Biotin synthase family. Homodimer. The cofactor is [4Fe-4S] cluster. [2Fe-2S] cluster is required as a cofactor.

It carries out the reaction (4R,5S)-dethiobiotin + (sulfur carrier)-SH + 2 reduced [2Fe-2S]-[ferredoxin] + 2 S-adenosyl-L-methionine = (sulfur carrier)-H + biotin + 2 5'-deoxyadenosine + 2 L-methionine + 2 oxidized [2Fe-2S]-[ferredoxin]. It participates in cofactor biosynthesis; biotin biosynthesis; biotin from 7,8-diaminononanoate: step 2/2. In terms of biological role, catalyzes the conversion of dethiobiotin (DTB) to biotin by the insertion of a sulfur atom into dethiobiotin via a radical-based mechanism. The chain is Biotin synthase from Porphyromonas gingivalis (strain ATCC 33277 / DSM 20709 / CIP 103683 / JCM 12257 / NCTC 11834 / 2561).